Here is a 172-residue protein sequence, read N- to C-terminus: C-phycocyanin beta chain (172 aa).

Residues Asn35, Asp39, Asn72, Arg77, Cys82, 82–88 (CLRDMEI), 149–151 (TIG), and Cys153 each bind (2R,3E)-phycocyanobilin. Asn72 is modified (N4-methylasparagine).

The protein belongs to the phycobiliprotein family. Heterodimer of an alpha and a beta subunit, which further assembles into trimers and the trimers into hexamers. The basic functional unit of phycobiliproteins is a ring-shaped hexamer formed from two back-to-back trimers contacting via the alpha chain subunits. The trimers are composed of alpha/beta subunit heterodimers arranged around a three-fold axis of symmetry. The phycoerythrins also contain a gamma subunit which is located in the center of the hexamer. In terms of processing, contains two covalently linked phycocyanobilin chromophores.

The protein localises to the plastid. It localises to the chloroplast thylakoid membrane. Light-harvesting photosynthetic tetrapyrrole chromophore-protein from the phycobiliprotein complex (phycobilisome, PBS). Phycocyanin is the major phycobiliprotein in the PBS rod. This is C-phycocyanin beta chain (cpcB) from Cyanidium caldarium (Red alga).